Here is a 166-residue protein sequence, read N- to C-terminus: NAD(P)H-quinone oxidoreductase subunit I, chloroplastic (166 aa).

4Fe-4S ferredoxin-type domains lie at 55-84 (GRIHFEFDKCIACEVCVRVCPIDLPVVDWK) and 95-124 (LNYSIDFGICIFCGNCVEYCPTNCLSMTEE). [4Fe-4S] cluster is bound by residues Cys-64, Cys-67, Cys-70, Cys-74, Cys-104, Cys-107, Cys-110, and Cys-114.

Belongs to the complex I 23 kDa subunit family. As to quaternary structure, NDH is composed of at least 16 different subunits, 5 of which are encoded in the nucleus. It depends on [4Fe-4S] cluster as a cofactor.

The protein localises to the plastid. It is found in the chloroplast thylakoid membrane. It carries out the reaction a plastoquinone + NADH + (n+1) H(+)(in) = a plastoquinol + NAD(+) + n H(+)(out). The catalysed reaction is a plastoquinone + NADPH + (n+1) H(+)(in) = a plastoquinol + NADP(+) + n H(+)(out). Functionally, NDH shuttles electrons from NAD(P)H:plastoquinone, via FMN and iron-sulfur (Fe-S) centers, to quinones in the photosynthetic chain and possibly in a chloroplast respiratory chain. The immediate electron acceptor for the enzyme in this species is believed to be plastoquinone. Couples the redox reaction to proton translocation, and thus conserves the redox energy in a proton gradient. The sequence is that of NAD(P)H-quinone oxidoreductase subunit I, chloroplastic from Hulsea algida (Pacific hulsea).